The following is a 234-amino-acid chain: MTKIAMANFKSAMPIFKSHAYLKELEKTLKPQHFDRVFVFPDFFGLLPNSFLHFTLGVQNAYPRDCGAFTGEITSKHLEELKIHTLLIGHSERRTLLKESPSFLKEKFDFFKSKNFKIVYCIGEELTTREKGFKAVKEFLSEQLENIDLNYPNLVVAYEPIWAIGTKKSASLEDIYLTHGFLKQILNQKTPLLYGGSVNTQNAKEILGIDSVDGLLIGSASWELENFKTIISFL.

8-10 (NFK) is a binding site for substrate. H90 serves as the catalytic Electrophile. E159 acts as the Proton acceptor in catalysis. Residues G165, S197, and 218 to 219 (GS) contribute to the substrate site.

As to quaternary structure, homodimer.

It is found in the cytoplasm. It catalyses the reaction D-glyceraldehyde 3-phosphate = dihydroxyacetone phosphate. It participates in carbohydrate biosynthesis; gluconeogenesis. Its pathway is carbohydrate degradation; glycolysis; D-glyceraldehyde 3-phosphate from glycerone phosphate: step 1/1. Involved in the gluconeogenesis. Catalyzes stereospecifically the conversion of dihydroxyacetone phosphate (DHAP) to D-glyceraldehyde-3-phosphate (G3P). The chain is Triosephosphate isomerase from Helicobacter pylori (strain ATCC 700392 / 26695) (Campylobacter pylori).